A 926-amino-acid polypeptide reads, in one-letter code: Periplasmic nitrate reductase (926 aa).

Residues 1–30 constitute a signal peptide (tat-type signal); it reads MNRRDFIKSAAASAACASAGIAIPANLSAA. One can recognise a 4Fe-4S Mo/W bis-MGD-type domain in the interval 37-93; sequence WRWDKAACRFCGTGCGIMVATKEGKIVAVKGDPEAPVNRGLNCIKGYFNAKIMYGED. Residues cysteine 44, cysteine 47, cysteine 51, and cysteine 79 each contribute to the [4Fe-4S] cluster site. Mo-bis(molybdopterin guanine dinucleotide)-binding positions include lysine 81, glutamine 149, asparagine 174, cysteine 178, 211–218, methionine 419, glutamine 423, asparagine 529, 554–555, lysine 577, aspartate 604, and 816–825; these read WGANMAEM, SD, and TGRVLEHWHS. Tryptophan 892 provides a ligand contact to substrate. Mo-bis(molybdopterin guanine dinucleotide)-binding residues include asparagine 900 and lysine 917.

Belongs to the prokaryotic molybdopterin-containing oxidoreductase family. NasA/NapA/NarB subfamily. Component of the periplasmic nitrate reductase NapAB complex composed of NapA and NapB. Requires [4Fe-4S] cluster as cofactor. The cofactor is Mo-bis(molybdopterin guanine dinucleotide). Post-translationally, predicted to be exported by the Tat system. The position of the signal peptide cleavage has not been experimentally proven.

The protein resides in the periplasm. It carries out the reaction 2 Fe(II)-[cytochrome] + nitrate + 2 H(+) = 2 Fe(III)-[cytochrome] + nitrite + H2O. Its function is as follows. Catalytic subunit of the periplasmic nitrate reductase complex NapAB. Receives electrons from NapB and catalyzes the reduction of nitrate to nitrite. In Campylobacter curvus (strain 525.92), this protein is Periplasmic nitrate reductase.